The chain runs to 783 residues: Ubiquitin carboxyl-terminal hydrolase 1 (783 aa).

Disordered regions lie at residues 1-22 (MPGV…KKNR) and 34-55 (KRAL…YKGS). Polar residues predominate over residues 7-16 (SESNGLSRGS). 2 positions are modified to phosphoserine: Ser16 and Ser42. Basic and acidic residues predominate over residues 45-55 (NEEKTSEYKGS). Phosphoserine is present on Ser67. Residues 81–783 (VGLNNLGNTC…TPYLLFYKKL (703 aa)) enclose the USP domain. The Nucleophile role is filled by Cys90. A disordered region spans residues 234 to 311 (EEYQKEEMSD…RKAAGDTLEI (78 aa)). 2 stretches are compositionally biased toward basic and acidic residues: residues 250 to 273 (DNMR…KSDA) and 284 to 296 (ISKE…ENQR). Ser473 bears the Phosphoserine mark. His591 acts as the Proton acceptor in catalysis. The tract at residues 685 to 722 (PDKVASTALPENRNSETNNTNGTDESDSNKESSDQTGI) is disordered. Ser766 is subject to Phosphoserine.

The protein belongs to the peptidase C19 family. In terms of assembly, interacts with FANCD2 and PCNA. Interacts with WDR48. Interacts with ATAD5; the interaction regulates USP1-mediated PCNA deubiquitination. Autocatalytic cleavage of USP1 following UV irradiation inactivates it, leading to an increase in ubiquitinated PCNA, recruitment of POLH and translesion synthesis. Post-translationally, ubiquitinated by the CRL2(KLHDC2) complex following autocatalytic cleavage, leading to its degradation: the CRL2(KLHDC2) complex recognizes the diglycine (Gly-Gly) at the C-terminus.

The protein resides in the nucleus. The catalysed reaction is Thiol-dependent hydrolysis of ester, thioester, amide, peptide and isopeptide bonds formed by the C-terminal Gly of ubiquitin (a 76-residue protein attached to proteins as an intracellular targeting signal).. Its function is as follows. Negative regulator of DNA damage repair which specifically deubiquitinates monoubiquitinated FANCD2. Also involved in PCNA-mediated translesion synthesis (TLS) by deubiquitinating monoubiquitinated PCNA. Has almost no deubiquitinating activity by itself and requires the interaction with WDR48 to have a high activity. The sequence is that of Ubiquitin carboxyl-terminal hydrolase 1 from Bos taurus (Bovine).